The chain runs to 402 residues: MKIVYVVGTCDTKGSELRYLRDLIRDAGCDVVLVDVSVSEFHSEASDVDVQPAEVARCHPNPLKAEELKDRGKAVAAMSQALVEYIRSRPDVDGIIGAGGSGGTALIAPAMRALPIGVPKVLVSTVASGNVAPYVGPTDISMMYSVTDVSGLNRISRVVLANAAHSIAGMVLKQVGAAADERPAIGLTMFGVTTPCVQAVTRALEANFDCLVFHATGTGGQSFEKLADSGLLVGGIDVSTTEVCDYLVGGVFPCTPDRFGAFARTKLPYVGSCGALDMVNFGAMETVPSQFRSRRLHVHNPQVTLMRTNPEECSRIGEWIGERLNLCEGPVRFLIPELGVSAIDAPGQPFHDPEADAVLFAALERTLRCTDKRQLARVPLHINDPQFADLLVTNLKEAFREH.

Belongs to the UPF0261 family.

This Mesorhizobium japonicum (strain LMG 29417 / CECT 9101 / MAFF 303099) (Mesorhizobium loti (strain MAFF 303099)) protein is UPF0261 protein mll9388.